A 183-amino-acid polypeptide reads, in one-letter code: Ly6/PLAUR domain-containing protein 6B (183 aa).

The N-terminal stretch at 1–39 (MLYKSSDRPAHKVSMLLLCHALAIAVVQIVIFSESWAFA) is a signal peptide. The region spanning 60–151 (FKCFTCENAG…VELPTNHTNA (92 aa)) is the UPAR/Ly6 domain. The segment at 60–154 (FKCFTCENAG…PTNHTNAVFA (95 aa)) is sufficient for inhibiting alpha-7 nAChR currents. 6 disulfide bridges follow: Cys-62–Cys-90, Cys-65–Cys-74, Cys-83–Cys-109, Cys-115–Cys-134, Cys-120–Cys-131, and Cys-135–Cys-140. Ser-164 carries the GPI-anchor amidated serine lipid modification. Positions 165–183 (SAPTLYLPVLAWVFVLPLL) are cleaved as a propeptide — removed in mature form.

It is found in the cell membrane. Functionally, likely acts as a modulator of nicotinic acetylcholine receptors (nAChRs) activity. In vitro acts on nAChRs in a subtype- and stoichiometry-dependent manner. Modulates specifically alpha-3(3):beta-4(2) nAChRs by enhancing the sensitivity to ACh, decreasing ACh-induced maximal current response and increasing the rate of desensitization to ACh; has no effect on alpha-7 homomeric nAChRs; modulates alpha-3(2):alpha-5:beta-4(2) nAChRs in the context of CHRNA5/alpha-5 variant Asn-398 but not its wild-type sequence. However, according to another report in vitro it can weakly inhibits alpha-7 nAChRs. The polypeptide is Ly6/PLAUR domain-containing protein 6B (LYPD6B) (Homo sapiens (Human)).